A 266-amino-acid chain; its full sequence is Small ribosomal subunit protein uS2 (266 aa).

It belongs to the universal ribosomal protein uS2 family.

The protein is Small ribosomal subunit protein uS2 of Corynebacterium diphtheriae (strain ATCC 700971 / NCTC 13129 / Biotype gravis).